The following is a 157-amino-acid chain: 2-C-methyl-D-erythritol 2,4-cyclodiphosphate synthase (157 aa).

A divalent metal cation contacts are provided by D8 and H10. 4-CDP-2-C-methyl-D-erythritol 2-phosphate is bound by residues 8–10 and 34–35; these read DVH and HS. Residue H42 participates in a divalent metal cation binding. 4-CDP-2-C-methyl-D-erythritol 2-phosphate contacts are provided by residues 56–58, 61–65, 100–106, 132–135, F139, and R142; these read DIG, FPDTD, AQAPKMA, and TTTE.

This sequence belongs to the IspF family. In terms of assembly, homotrimer. The cofactor is a divalent metal cation.

It catalyses the reaction 4-CDP-2-C-methyl-D-erythritol 2-phosphate = 2-C-methyl-D-erythritol 2,4-cyclic diphosphate + CMP. Its pathway is isoprenoid biosynthesis; isopentenyl diphosphate biosynthesis via DXP pathway; isopentenyl diphosphate from 1-deoxy-D-xylulose 5-phosphate: step 4/6. Its function is as follows. Involved in the biosynthesis of isopentenyl diphosphate (IPP) and dimethylallyl diphosphate (DMAPP), two major building blocks of isoprenoid compounds. Catalyzes the conversion of 4-diphosphocytidyl-2-C-methyl-D-erythritol 2-phosphate (CDP-ME2P) to 2-C-methyl-D-erythritol 2,4-cyclodiphosphate (ME-CPP) with a corresponding release of cytidine 5-monophosphate (CMP). The chain is 2-C-methyl-D-erythritol 2,4-cyclodiphosphate synthase from Pseudomonas syringae pv. tomato (strain ATCC BAA-871 / DC3000).